The primary structure comprises 476 residues: Aspartyl/glutamyl-tRNA(Asn/Gln) amidotransferase subunit B (476 aa).

Belongs to the GatB/GatE family. GatB subfamily. Heterotrimer of A, B and C subunits.

It catalyses the reaction L-glutamyl-tRNA(Gln) + L-glutamine + ATP + H2O = L-glutaminyl-tRNA(Gln) + L-glutamate + ADP + phosphate + H(+). It carries out the reaction L-aspartyl-tRNA(Asn) + L-glutamine + ATP + H2O = L-asparaginyl-tRNA(Asn) + L-glutamate + ADP + phosphate + 2 H(+). Its function is as follows. Allows the formation of correctly charged Asn-tRNA(Asn) or Gln-tRNA(Gln) through the transamidation of misacylated Asp-tRNA(Asn) or Glu-tRNA(Gln) in organisms which lack either or both of asparaginyl-tRNA or glutaminyl-tRNA synthetases. The reaction takes place in the presence of glutamine and ATP through an activated phospho-Asp-tRNA(Asn) or phospho-Glu-tRNA(Gln). This is Aspartyl/glutamyl-tRNA(Asn/Gln) amidotransferase subunit B from Neisseria meningitidis serogroup A / serotype 4A (strain DSM 15465 / Z2491).